Reading from the N-terminus, the 193-residue chain is dTTP/UTP pyrophosphatase (193 aa).

The active-site Proton acceptor is the D73.

Belongs to the Maf family. YhdE subfamily. A divalent metal cation serves as cofactor.

It localises to the cytoplasm. The catalysed reaction is dTTP + H2O = dTMP + diphosphate + H(+). It catalyses the reaction UTP + H2O = UMP + diphosphate + H(+). Functionally, nucleoside triphosphate pyrophosphatase that hydrolyzes dTTP and UTP. May have a dual role in cell division arrest and in preventing the incorporation of modified nucleotides into cellular nucleic acids. This Caulobacter vibrioides (strain ATCC 19089 / CIP 103742 / CB 15) (Caulobacter crescentus) protein is dTTP/UTP pyrophosphatase.